A 138-amino-acid chain; its full sequence is Putative pre-16S rRNA nuclease (138 aa).

Belongs to the YqgF nuclease family.

Its subcellular location is the cytoplasm. Functionally, could be a nuclease involved in processing of the 5'-end of pre-16S rRNA. This is Putative pre-16S rRNA nuclease from Caldicellulosiruptor bescii (strain ATCC BAA-1888 / DSM 6725 / KCTC 15123 / Z-1320) (Anaerocellum thermophilum).